A 706-amino-acid polypeptide reads, in one-letter code: Kinesin-like protein KIP2 (706 aa).

Low complexity-rich tracts occupy residues 1 to 28 (MIQK…QSPS) and 36 to 63 (SNLT…RSNS). The tract at residues 1–139 (MIQKMSPSLR…QPRSNSHHGS (139 aa)) is disordered. One can recognise a Kinesin motor domain in the interval 102 to 493 (SITVTIRPKP…LRFASRAKNV (392 aa)). The segment covering 127 to 139 (RYSQPRSNSHHGS) has biased composition (polar residues). 202 to 209 (GMTGSGKT) is an ATP binding site. Residues 413–445 (VGSNIPSPSASGSSSSSGNATNNGTSPSNHIPY) form a disordered region. Residues 414 to 441 (GSNIPSPSASGSSSSSGNATNNGTSPSN) are compositionally biased toward low complexity. 3 coiled-coil regions span residues 507–541 (NNDG…NIGE), 569–589 (MRAE…LLDK), and 612–689 (TLLE…RALK).

This sequence belongs to the TRAFAC class myosin-kinesin ATPase superfamily. Kinesin family. Might be dimeric.

The protein resides in the cytoplasm. It localises to the cytoskeleton. Functionally, required for assembly of the mitotic spindle. This chain is Kinesin-like protein KIP2 (KIP2), found in Saccharomyces cerevisiae (strain ATCC 204508 / S288c) (Baker's yeast).